The sequence spans 1200 residues: Chromosome partition protein Smc (1200 aa).

32–39 (PNGCGKSN) contacts ATP. 2 coiled-coil regions span residues 171–219 (VTKY…AEKY) and 252–342 (LENL…MSEA). The SMC hinge domain maps to 528-644 (QGIFGLVADV…QDVATARAWT (117 aa)). 2 coiled-coil regions span residues 679–706 (ALQK…ILTR) and 735–762 (LASQ…LEVE). Positions 763 to 795 (EGQLTQSHQALEHEEEASRGEVAHGQADREGRE) are disordered. The segment covering 772–795 (ALEHEEEASRGEVAHGQADREGRE) has biased composition (basic and acidic residues). The stretch at 1002-1039 (HAELSKRYDFLTAQKKDLQSSIEQLKEAIQRIDATSRE) forms a coiled coil.

It belongs to the SMC family. As to quaternary structure, homodimer. Probably forms the Structural Maintenance of Chromosome (SMC) condensin-like complex with ScpA and ScpB.

It localises to the cytoplasm. In terms of biological role, a conditionally essential component of the chromosome segregation machinery. Required for chromosome condensation and partitioning. Important for positioning of ParB-parS complexes (ori of replication) and of the ter replication site, as well as for segration of the ParB-parS complex and thus chromosome segregation. May act via the formation of a condensin-like complex containing Smc, ScpA and ScpB that pulls DNA away from mid-cell into both cell halves. The polypeptide is Chromosome partition protein Smc (Myxococcus xanthus (strain DK1622)).